Consider the following 582-residue polypeptide: Putative phospholipase B-like 2 (582 aa).

The signal sequence occupies residues 1–42; it reads MTRLIRSKKQFLIRSLHSVFYYLGSLLHSTFEMNVFIGLLLA. N-linked (GlcNAc...) asparagine glycans are attached at residues asparagine 91, asparagine 141, asparagine 178, asparagine 224, and asparagine 318. Cysteine 139 and cysteine 146 are joined by a disulfide. The cysteines at positions 480 and 482 are disulfide-linked. An N-linked (GlcNAc...) asparagine glycan is attached at asparagine 502.

This sequence belongs to the phospholipase B-like family.

The protein localises to the secreted. Putative phospholipase. This is Putative phospholipase B-like 2 from Caenorhabditis elegans.